Here is a 30-residue protein sequence, read N- to C-terminus: Gamma-II crystallin (30 aa).

Positions 1–30 (GKITFYEDRNFQGRCYECSTDCPDLSPYFS) constitute a Beta/gamma crystallin 'Greek key' domain.

Belongs to the beta/gamma-crystallin family. Monomer.

Crystallins are the dominant structural components of the vertebrate eye lens. The chain is Gamma-II crystallin from Rhizoprionodon acutus (Milk shark).